A 372-amino-acid chain; its full sequence is MKYDLIIIGSGSVGAAAGYYATRAGLNVLMTDAHMPPHQHGSHHGDTRLIRHAYGEGEKYVPLVLRAQTLWDDLSRHNEDDPIFVRSGVINLGPADSAFLANVAHSAEQWQLNVEKLDAQGIMARWPEIRVPDNYIGLFETDSGFLRSELAIKTWIQLAKEAGCAQLFNCPVTAIRHDDDGVTIETADGEYQAKKAIVCAGTWVKDLLPELPVQPVRKVFAWYQADGRYSVKNKFPAFTGELPNGDQYYGFPAENDALKIGKHNGGQVIHSADERVPFAEVVSDGSEAFPFLRNVLPGIGCCLYGAACTYDNSPDEDFIIDTLPGHDNTLLITGLSGHGFKFASVLGEIAADFAQDKKSDFDLTPFSLSRFQ.

4–34 (DLIIIGSGSVGAAAGYYATRAGLNVLMTDAH) is an FAD binding site. Position 308 is an S-8alpha-FAD cysteine (Cys-308).

Belongs to the MSOX/MTOX family. MTOX subfamily. Monomer. FAD serves as cofactor.

The catalysed reaction is N(alpha)-methyl-L-tryptophan + O2 + H2O = L-tryptophan + formaldehyde + H2O2. In terms of biological role, catalyzes the oxidative demethylation of N-methyl-L-tryptophan. This Escherichia coli O157:H7 protein is N-methyl-L-tryptophan oxidase.